The chain runs to 520 residues: Keratin, type II cytoskeletal 78 (520 aa).

The head stretch occupies residues 1 to 110 (MSLSPCRAQR…DPQFQVVRTQ (110 aa)). The coil 1A stretch occupies residues 111–146 (ETQEIRTLNNQFASFIDKVRFLEQQNKVLETKWHLL). The 314-residue stretch at 111 to 424 (ETQEIRTLNN…RLLEGEECRM (314 aa)) folds into the IF rod domain. The segment at 147–165 (QQQGLSGSQQGLEPVFEAC) is linker 1. The segment at 166–258 (LDQLRKQLEQ…LNEEELGQLQ (93 aa)) is coil 1B. Residues 259 to 281 (TQASDTSVVLSMDNNRYLDFSSI) are linker 12. Residues 282–421 (ITEVRARYEE…TYRRLLEGEE (140 aa)) are coil 2. The segment at 422 to 520 (CRMSGECTSQ…ESSLKTSITY (99 aa)) is tail.

The protein belongs to the intermediate filament family. In terms of assembly, heterotetramer of two type I and two type II keratins. As to expression, in non-keratinising esophageal and vaginal epithelium, strongly expressed in the basal and parabasal/lower suprabasal cell layers with considerably decreased expression in the mid/upper suprabasal layers (at protein level). A similar gradient from basal to lower suprabasal layers is seen in the partially keratinised dorsal tongue epithelium, in the scalp and in the plantar epidermis (at protein level). Extension of expression into the suprabasal compartments is distinctly more pronounced in non-keratinising epithelia than in keratinising epithelia and epidermis (at protein level). In scalp sections, present in the interfollicular epidermis and infundibulum including the entire outer root sheath of the hair follicles and also in the sebocytes (at protein level). In sweat glands, expressed in peripheral and luminal cells of the lower duct and in peripheral cells of the middle/upper duct with no expression observed in luminal cells (at protein level). In embryos at the 14th week of pregnancy, detected in basal and parabasal layers but is absent from the uppermost epidermal layer (at protein level). Expressed in tongue epithelium.

The protein is Keratin, type II cytoskeletal 78 (KRT78) of Homo sapiens (Human).